Here is a 616-residue protein sequence, read N- to C-terminus: Proline dehydrogenase 1, mitochondrial (616 aa).

The protein belongs to the proline oxidase family. It depends on FAD as a cofactor.

It localises to the mitochondrion matrix. It carries out the reaction L-proline + a quinone = (S)-1-pyrroline-5-carboxylate + a quinol + H(+). Its pathway is amino-acid degradation; L-proline degradation into L-glutamate; L-glutamate from L-proline: step 1/2. Functionally, converts proline to delta-1-pyrroline-5-carboxylate. Through proline catabolism, promotes reactive oxygen species (ROS) production and the transcription of skn-1 target genes in response to bacterial infection by P.aeruginosa. The chain is Proline dehydrogenase 1, mitochondrial from Caenorhabditis elegans.